The sequence spans 483 residues: Bifunctional pantoate ligase/cytidylate kinase (483 aa).

Residues 1-246 (MPTMGALHAG…CGSTRLIDHA (246 aa)) form a pantoate--beta-alanine ligase region. ATP is bound at residue 4–11 (MGALHAGH). H11 acts as the Proton donor in catalysis. Q34 serves as a coordination point for (R)-pantoate. Q34 lines the beta-alanine pocket. Position 124-127 (124-127 (GEKD)) interacts with ATP. A (R)-pantoate-binding site is contributed by Q130. ATP is bound by residues V153 and 161 to 164 (LSSR). Positions 247 to 483 (FLMTRQPLVA…AEEAWPTPQR (237 aa)) are cytidylate kinase.

In the N-terminal section; belongs to the pantothenate synthetase family. This sequence in the C-terminal section; belongs to the cytidylate kinase family. Type 1 subfamily.

The protein localises to the cytoplasm. The catalysed reaction is (R)-pantoate + beta-alanine + ATP = (R)-pantothenate + AMP + diphosphate + H(+). The enzyme catalyses CMP + ATP = CDP + ADP. It carries out the reaction dCMP + ATP = dCDP + ADP. The protein operates within cofactor biosynthesis; (R)-pantothenate biosynthesis; (R)-pantothenate from (R)-pantoate and beta-alanine: step 1/1. In terms of biological role, catalyzes the condensation of pantoate with beta-alanine in an ATP-dependent reaction via a pantoyl-adenylate intermediate. Catalyzes the transfer of a phosphate group from ATP to either CMP or dCMP to form CDP or dCDP and ADP, respectively. This chain is Bifunctional pantoate ligase/cytidylate kinase, found in Synechococcus sp. (strain CC9902).